The following is a 452-amino-acid chain: cAMP-dependent protein kinase regulatory subunit (452 aa).

Positions 28-212 (QFCANYFNSK…ELSKTLGSNF (185 aa)) are dimerization and phosphorylation. Positions 74-163 (IMTTNKRQPS…APPVPKSKIP (90 aa)) are disordered. Over residues 75–84 (MTTNKRQPSF) the composition is skewed to polar residues. A compositionally biased stretch (basic and acidic residues) spans 95 to 106 (SIDHHHDDDPKE). Position 173 is a phosphoserine (serine 173). Residues 213–330 (LFRQ…FLKD) and 333–451 (VLSS…QGSS) each bind a nucleoside 3',5'-cyclic phosphate. 3',5'-cyclic AMP is bound by residues glutamate 278, arginine 287, glutamate 399, and arginine 408.

The protein belongs to the cAMP-dependent kinase regulatory chain family. In terms of assembly, tetramer, composed of 2 regulatory (R) and 2 catalytic (C) subunits. In the presence of cAMP it dissociates into 2 active monomeric C subunits and an R dimer.

The chain is cAMP-dependent protein kinase regulatory subunit (PKAR) from Debaryomyces hansenii (strain ATCC 36239 / CBS 767 / BCRC 21394 / JCM 1990 / NBRC 0083 / IGC 2968) (Yeast).